Here is a 122-residue protein sequence, read N- to C-terminus: Glycine cleavage system H protein (122 aa).

The region spanning 19-101 (TATIGITKHA…EGNSWLYKIK (83 aa)) is the Lipoyl-binding domain. Lys-60 bears the N6-lipoyllysine mark.

Belongs to the GcvH family. As to quaternary structure, the glycine cleavage system is composed of four proteins: P, T, L and H. (R)-lipoate serves as cofactor.

The glycine cleavage system catalyzes the degradation of glycine. The H protein shuttles the methylamine group of glycine from the P protein to the T protein. The chain is Glycine cleavage system H protein from Dinoroseobacter shibae (strain DSM 16493 / NCIMB 14021 / DFL 12).